The following is a 1513-amino-acid chain: DNA polymerase alpha catalytic subunit (1513 aa).

Residues 235-254 (STNQNANASDSKRVSNQTND) form a disordered region. 8 residues coordinate Zn(2+): cysteine 1344, cysteine 1347, cysteine 1370, cysteine 1373, cysteine 1404, cysteine 1409, cysteine 1422, and cysteine 1427. A CysA-type zinc finger spans residues 1344–1373 (CPHCSESYHFPGIFQDGKNNTLSGLLCIKC). A CysB motif motif is present at residues 1404 to 1427 (CQEPACGAVSRQLLYNNKCINLAC).

Belongs to the DNA polymerase type-B family.

The protein resides in the nucleus. The catalysed reaction is DNA(n) + a 2'-deoxyribonucleoside 5'-triphosphate = DNA(n+1) + diphosphate. Its function is as follows. Polymerase alpha in a complex with DNA primase is a replicative polymerase. This chain is DNA polymerase alpha catalytic subunit, found in Oxytricha trifallax (Sterkiella histriomuscorum).